The primary structure comprises 820 residues: Leucine--tRNA ligase (820 aa).

The 'HIGH' region motif lies at 40–51 (PYPSGAGLHVGH). Residues 601–605 (KMSKS) carry the 'KMSKS' region motif. Lys604 is a binding site for ATP.

The protein belongs to the class-I aminoacyl-tRNA synthetase family.

The protein localises to the cytoplasm. The enzyme catalyses tRNA(Leu) + L-leucine + ATP = L-leucyl-tRNA(Leu) + AMP + diphosphate. This chain is Leucine--tRNA ligase, found in Chlamydia caviae (strain ATCC VR-813 / DSM 19441 / 03DC25 / GPIC) (Chlamydophila caviae).